A 124-amino-acid chain; its full sequence is UPF0102 protein HCH_05895 (124 aa).

It belongs to the UPF0102 family.

The protein is UPF0102 protein HCH_05895 of Hahella chejuensis (strain KCTC 2396).